The following is a 186-amino-acid chain: MAETSSLISGVAQRYAGSLFELALDANSVASVEKDLGRFEALLSGSKDLRRLISSPVFSSEDQLHAIGAIADKAGIKGLVGNFLRVVAQNRRLFALPGIIAAFRQIAAEHRGEISADVVSAHELTSAQQNELKATLKGVAGKDVTINVTVDPSILGGLIVKMGSRQIDTSLRTKLSSLKLALKEVG.

The protein belongs to the ATPase delta chain family. F-type ATPases have 2 components, F(1) - the catalytic core - and F(0) - the membrane proton channel. F(1) has five subunits: alpha(3), beta(3), gamma(1), delta(1), epsilon(1). F(0) has three main subunits: a(1), b(2) and c(10-14). The alpha and beta chains form an alternating ring which encloses part of the gamma chain. F(1) is attached to F(0) by a central stalk formed by the gamma and epsilon chains, while a peripheral stalk is formed by the delta and b chains.

The protein localises to the cell inner membrane. F(1)F(0) ATP synthase produces ATP from ADP in the presence of a proton or sodium gradient. F-type ATPases consist of two structural domains, F(1) containing the extramembraneous catalytic core and F(0) containing the membrane proton channel, linked together by a central stalk and a peripheral stalk. During catalysis, ATP synthesis in the catalytic domain of F(1) is coupled via a rotary mechanism of the central stalk subunits to proton translocation. In terms of biological role, this protein is part of the stalk that links CF(0) to CF(1). It either transmits conformational changes from CF(0) to CF(1) or is implicated in proton conduction. The chain is ATP synthase subunit delta from Brucella suis biovar 1 (strain 1330).